A 639-amino-acid polypeptide reads, in one-letter code: MEATATKEHLNFQTEVKQLLKLMIHSLYSNKEIFLRELISNASDAADKLRFEALTDGALYESDSDLKIRVSYDKEARTITVADNGIGMSRQEVIDHIGTIAKSGTREFFDALTGDQAKDAHLIGQFGVGFYSAFIVADKVTLTTRRAGLTHEHGVRWESGGEGDYTLETIDKPGRGTEVTLHLREGEDELLNGWRLRSIIRKYSDHITLPIVMKKEEWSQEKNENTVTEEDETINQASALWARPKNEISEEQYNEFYKHVAHDFEPPLAYVHARVEGKQEYTQLLYVPSRAPFDLYDRESRHGIKLYVRRVFIMDDAKQLLPNYLRFVRGIIDSNDLPLNVSREILQESKDIEAMRAGSVKKVLGLLDDLAQSETDEGKAKFKTFWKEFGQVMKEGVAEDYANRERIAKLLRFVSTHSDSEEQDVSLSDYVGRMKDGQEKIYYVTADSLTAAKSSPHLEIFRKKDIEVILLFDRVDEWLVANLPEFEGKHLQSVAKGSLDLGKLEDEAEKKEQEKEAGEYKELTEKIKEVLGEQVKDVRITLRLTESPACLVTETHDMSGNLERLLKSAGQKVTHTKPILEINPYHPMVERLKSEETHFADWSHILFDQALLAEGGQLEDPASFVKRINQLFLSTGSKE.

The interval 1 to 343 (MEATATKEHL…SNDLPLNVSR (343 aa)) is a; substrate-binding. Positions 344–564 (EILQESKDIE…THDMSGNLER (221 aa)) are b. The tract at residues 565–639 (LLKSAGQKVT…QLFLSTGSKE (75 aa)) is c.

This sequence belongs to the heat shock protein 90 family. As to quaternary structure, homodimer.

The protein resides in the cytoplasm. Molecular chaperone. Has ATPase activity. This Nitrosospira multiformis (strain ATCC 25196 / NCIMB 11849 / C 71) protein is Chaperone protein HtpG.